The sequence spans 538 residues: (R)-citramalate synthase (538 aa).

The Pyruvate carboxyltransferase domain maps to 3-268; it reads IKVYDTTLRD…IPKENLKKLF (266 aa).

This sequence belongs to the alpha-IPM synthase/homocitrate synthase family.

The enzyme catalyses pyruvate + acetyl-CoA + H2O = (3R)-citramalate + CoA + H(+). It participates in amino-acid biosynthesis; L-isoleucine biosynthesis; 2-oxobutanoate from pyruvate: step 1/3. Catalyzes the condensation of pyruvate and acetyl-coenzyme A to form (R)-citramalate. This is (R)-citramalate synthase from Thermotoga maritima (strain ATCC 43589 / DSM 3109 / JCM 10099 / NBRC 100826 / MSB8).